Consider the following 155-residue polypeptide: S-ribosylhomocysteine lyase (155 aa).

Residues His53, His57, and Cys121 each contribute to the Fe cation site.

The protein belongs to the LuxS family. Homodimer. Fe cation serves as cofactor.

The enzyme catalyses S-(5-deoxy-D-ribos-5-yl)-L-homocysteine = (S)-4,5-dihydroxypentane-2,3-dione + L-homocysteine. In terms of biological role, involved in the synthesis of autoinducer 2 (AI-2) which is secreted by bacteria and is used to communicate both the cell density and the metabolic potential of the environment. The regulation of gene expression in response to changes in cell density is called quorum sensing. Catalyzes the transformation of S-ribosylhomocysteine (RHC) to homocysteine (HC) and 4,5-dihydroxy-2,3-pentadione (DPD). In Thermus thermophilus (strain ATCC BAA-163 / DSM 7039 / HB27), this protein is S-ribosylhomocysteine lyase.